The sequence spans 42 residues: Cytochrome b559 subunit beta (42 aa).

Residues W17–A33 form a helical membrane-spanning segment. H21 contributes to the heme binding site.

Belongs to the PsbE/PsbF family. Heterodimer of an alpha subunit and a beta subunit. PSII is composed of 1 copy each of membrane proteins PsbA, PsbB, PsbC, PsbD, PsbE, PsbF, PsbH, PsbI, PsbJ, PsbK, PsbL, PsbM, PsbT, PsbX, PsbY, PsbZ, Psb30/Ycf12, at least 3 peripheral proteins of the oxygen-evolving complex and a large number of cofactors. It forms dimeric complexes. Heme b is required as a cofactor.

The protein localises to the plastid. It is found in the chloroplast thylakoid membrane. Its function is as follows. This b-type cytochrome is tightly associated with the reaction center of photosystem II (PSII). PSII is a light-driven water:plastoquinone oxidoreductase that uses light energy to abstract electrons from H(2)O, generating O(2) and a proton gradient subsequently used for ATP formation. It consists of a core antenna complex that captures photons, and an electron transfer chain that converts photonic excitation into a charge separation. In Guillardia theta (Cryptophyte), this protein is Cytochrome b559 subunit beta.